Consider the following 246-residue polypeptide: Probable transcriptional regulatory protein CLD_1467 (246 aa).

The protein belongs to the TACO1 family.

The protein resides in the cytoplasm. In Clostridium botulinum (strain Okra / Type B1), this protein is Probable transcriptional regulatory protein CLD_1467.